The following is a 631-amino-acid chain: MTDESSSSISYPPIKKYKKSLKLNNNTNNNNKNNNNHNNRDIVMQPNSTDEESSDNEKIGFSDPENEKINKHKASFKDSNDENNNNSTYYEDTDDDDYEDEDEDENHKIKDESDNSEDFNNHTKNTTDLDEGFKSTVNGSESEEEEEEEEYEEEEEEDEEGKFNLDQYDEFYEDDDDGDDDDDDDENAQDKVEILQIEHQNLDNDNDNDNDYANDNIYTKAKEALHLSAVPDKLPGREKEKATIASFIRAKLKANESGGCLYIAGMPGTGKTATVKEIIKELQAKKKQQGGGGGLNFQFIEINGMQLSDPHQLYHILYNKMQKTRKSLEPKKISSQDALRLIQRNFELKNKKKQFRVILVDEFDSLITKKQTVIYNLFEWPNKPNSKLIIIAIANTMNLPDTLLPRVKSRMGLQKVPFTPYNIEQLETIIKYRLQDLDAFDEESIQICSKRVAAVCGDARRALEICRKAATIANQEYQKKLLIFNNSNNNKSLSGSQKLPIPGPITADHIEEVFEQFSSPLLKKLNQLSFYEKLFLLCICRENQFSNVPEVKYGTISTRMRIITKKINVSCPNPTQLFQLAGNLLGCKFIIIQDDKPINWDHQIKLNLPLEDLSFGLEQDPDLKNLEISNN.

2 stretches are compositionally biased toward low complexity: residues 1–14 (MTDESSSSISYPPI) and 22–37 (KLNNNTNNNNKNNNNH). The tract at residues 1-164 (MTDESSSSIS…EEEDEEGKFN (164 aa)) is disordered. A compositionally biased stretch (basic and acidic residues) spans 55-80 (DNEKIGFSDPENEKINKHKASFKDSN). The segment covering 91-104 (EDTDDDDYEDEDED) has biased composition (acidic residues). The span at 105–133 (ENHKIKDESDNSEDFNNHTKNTTDLDEGF) shows a compositional bias: basic and acidic residues. A compositionally biased stretch (acidic residues) spans 141 to 160 (ESEEEEEEEEYEEEEEEDEE). ATP contacts are provided by residues valine 230 and 265–273 (GMPGTGKTA). The Mg(2+) site is built by aspartate 361 and glutamate 362. Glutamate 362, asparagine 395, and arginine 460 together coordinate ATP.

It belongs to the ORC1 family. ORC is composed of six subunits.

It localises to the nucleus. Its function is as follows. Component of the origin recognition complex (ORC) that binds origins of replication. DNA-binding is ATP-dependent, however specific DNA sequences that define origins of replication have not been identified so far. ORC is required to assemble the pre-replication complex necessary to initiate DNA replication. The protein is Origin recognition complex subunit 1 (orcA) of Dictyostelium discoideum (Social amoeba).